Consider the following 317-residue polypeptide: Metaxin-1 (317 aa).

Residues Lys38, Lys41, Lys78, and Lys168 each participate in a glycyl lysine isopeptide (Lys-Gly) (interchain with G-Cter in ubiquitin) cross-link. A helical membrane pass occupies residues 272 to 292; the sequence is ILSVLAGLAAMVGYALLSGIV.

It belongs to the metaxin family. Interacts with MTX2/metaxin-2. Associates with the mitochondrial contact site and cristae organizing system (MICOS) complex, composed of at least MICOS10/MIC10, CHCHD3/MIC19, CHCHD6/MIC25, APOOL/MIC27, IMMT/MIC60, APOO/MIC23/MIC26 and QIL1/MIC13. This complex was also known under the names MINOS or MitOS complex. The MICOS complex associates with mitochondrial outer membrane proteins SAMM50, MTX1 and MTX2 (together described as components of the mitochondrial outer membrane sorting assembly machinery (SAM) complex) and DNAJC11, mitochondrial inner membrane protein TMEM11 and with HSPA9. The MICOS and SAM complexes together with DNAJC11 are part of a large protein complex spanning both membranes termed the mitochondrial intermembrane space bridging (MIB) complex. Interacts with ARMC1. Post-translationally, ubiquitinated by PRKN during mitophagy, leading to its degradation and enhancement of mitophagy. Deubiquitinated by USP30. Ubiquitous. Higher levels are seen in the kidney as compared to other tissues.

It is found in the mitochondrion outer membrane. In terms of biological role, involved in transport of proteins into the mitochondrion. Essential for embryonic development. The sequence is that of Metaxin-1 (Mtx1) from Mus musculus (Mouse).